A 117-amino-acid chain; its full sequence is ATP-dependent Clp protease adapter protein ClpS 1 (117 aa).

Residues 1–33 (MIAMPVRMQQGSEGDGGGPSRGTSVITRTKPKT) are disordered.

The protein belongs to the ClpS family. In terms of assembly, binds to the N-terminal domain of the chaperone ClpA.

Involved in the modulation of the specificity of the ClpAP-mediated ATP-dependent protein degradation. The protein is ATP-dependent Clp protease adapter protein ClpS 1 of Rhizobium meliloti (strain 1021) (Ensifer meliloti).